Consider the following 359-residue polypeptide: Peptide chain release factor 1 (359 aa).

At Gln238 the chain carries N5-methylglutamine.

Belongs to the prokaryotic/mitochondrial release factor family. Methylated by PrmC. Methylation increases the termination efficiency of RF1.

The protein localises to the cytoplasm. Peptide chain release factor 1 directs the termination of translation in response to the peptide chain termination codons UAG and UAA. The chain is Peptide chain release factor 1 from Mycoplasmopsis pulmonis (strain UAB CTIP) (Mycoplasma pulmonis).